A 488-amino-acid polypeptide reads, in one-letter code: Zinc metalloproteinase-disintegrin agkistin (488 aa).

The N-terminal stretch at 1–20 (MIQVLLVTICLAVFPYQGSS) is a signal peptide. The propeptide occupies 21 to 195 (IILESGNVND…NFPPDGRIEF (175 aa)). In terms of domain architecture, Peptidase M12B spans 198–394 (RYIELVIVAD…NPLASYCLYN (197 aa)). Residue glutamate 201 coordinates Ca(2+). An N-linked (GlcNAc...) asparagine glycan is attached at asparagine 258. Aspartate 285 contacts Ca(2+). 3 disulfides stabilise this stretch: cysteine 309/cysteine 391, cysteine 349/cysteine 373, and cysteine 351/cysteine 356. Histidine 334 contributes to the Zn(2+) binding site. Glutamate 335 is an active-site residue. Positions 338 and 344 each coordinate Zn(2+). Ca(2+) contacts are provided by cysteine 391, asparagine 394, valine 406, asparagine 409, glutamate 413, glutamate 416, and aspartate 419. One can recognise a Disintegrin domain in the interval 404-488 (PPVCGNYYLE…AGCPRNPSHA (85 aa)). Cystine bridges form between cysteine 407/cysteine 426, cysteine 418/cysteine 436, cysteine 420/cysteine 431, cysteine 430/cysteine 453, cysteine 444/cysteine 450, cysteine 449/cysteine 474, and cysteine 462/cysteine 481. Residues 466–468 (RGD) carry the Cell attachment site motif.

It belongs to the venom metalloproteinase (M12B) family. P-II subfamily. P-IIb sub-subfamily. Monomer. Zn(2+) serves as cofactor. As to expression, expressed by the venom gland.

It is found in the secreted. In terms of biological role, inhibits ADP-induced human platelet aggregation, inhibits bovine aortic endothelial cells (BAEC) migration, has anti-angiogenic activity and induces BAEC and human micro-vascular endothelial cell (HMEC) apoptosis. The metalloproteinase domain may act in hemorrhage. This is Zinc metalloproteinase-disintegrin agkistin from Gloydius halys (Chinese water mocassin).